Here is a 217-residue protein sequence, read N- to C-terminus: GTPase IMAP family member GIMD1 (217 aa).

The 212-residue stretch at 6-217 (KMIINLALFG…ENCYQVLTFK (212 aa)) folds into the AIG1-type G domain. GTP-binding positions include 15 to 23 (GMTQSGKSS), Ser36, and 148 to 150 (HAE).

The protein belongs to the TRAFAC class TrmE-Era-EngA-EngB-Septin-like GTPase superfamily. AIG1/Toc34/Toc159-like paraseptin GTPase family. IAN subfamily.

This Homo sapiens (Human) protein is GTPase IMAP family member GIMD1 (GIMD1).